The following is a 189-amino-acid chain: 2-oxoglutarate synthase subunit KorC (189 aa).

Heterotetramer of the KorA, KorB, KorC and KorD subunits.

It carries out the reaction 2 oxidized [2Fe-2S]-[ferredoxin] + 2-oxoglutarate + CoA = succinyl-CoA + 2 reduced [2Fe-2S]-[ferredoxin] + CO2 + H(+). This Methanothermobacter thermautotrophicus (strain ATCC 29096 / DSM 1053 / JCM 10044 / NBRC 100330 / Delta H) (Methanobacterium thermoautotrophicum) protein is 2-oxoglutarate synthase subunit KorC (korC).